A 722-amino-acid polypeptide reads, in one-letter code: MSSQGHHKMSGGGKKGAMEQDYTDVVDLGDRFSADMARLCMNEQYADVEFIVEEERIPAHRVILAARSEYFRALLYGGMAETTQRQIPLEVPLEAFKVLLRYIYSGTLLLSTLDEDSTIDVLGMANQYGFQDLEMAISNYLRQYLALDNVCMILDAARLYNLEELTEVCLMFMDRNAGDLLLHNSFNTLSKESLEEVLRRDCFFAPEVQIFLAVWKWSRFNSNVDFKSVVSYVRLPLMNLEHLLQVVRPSGILDPDKILDAIDERSTSKALPYRAALWPEENVAAETFLSRCIQGECRDALLDGDVTTYDMENGYTRHCITDSKDAGIVVELGTFCMINHIRMLLWDRDSRAYSYYVEVSGDQQHWDRVVDYSDYHCRSWQYLYFEARPVRFIRLVGTQNTVNRVFHVVGLEAMHTAKVPRLVNHFVAPKTNVATVEMSAIVTDGVSRTRNALINGDYVRYDWDSGYTCHQLGSGEIVVRLGQPYYLGSMRLLLWDCDDRTYSFYIEISTNRKEWQMVVDRRNDRTRSWQNFHFTPRPVVYIRIVGTRNTANEIFHCVHLECPTQDKNYLKKIADMEKEREKREKEKKTAKTDDDNIASTSGSSLASGHAESPSTSSSSSQSVLRSIHWPPQTREVAVAPLTPPALSPPGTPALPAPLTPATSSPHNNHEQNQPSNISADASHHTSPSSRSNPSPSLSRSRSQSAELEPVPPLVELDTRETL.

A BTB domain is found at 46–112 (ADVEFIVEEE…IYSGTLLLST (67 aa)). The 97-residue stretch at 151 to 247 (CMILDAARLY…MNLEHLLQVV (97 aa)) folds into the BACK domain. Residues 565–593 (QDKNYLKKIADMEKEREKREKEKKTAKTD) are a coiled coil. The span at 577-594 (EKEREKREKEKKTAKTDD) shows a compositional bias: basic and acidic residues. Disordered stretches follow at residues 577-626 (EKER…VLRS) and 640-722 (PLTP…RETL). Polar residues predominate over residues 597 to 606 (IASTSGSSLA). Positions 607 to 626 (SGHAESPSTSSSSSQSVLRS) are enriched in low complexity. The segment covering 641-658 (LTPPALSPPGTPALPAPL) has biased composition (pro residues). Over residues 670 to 679 (EQNQPSNISA) the composition is skewed to polar residues. Low complexity predominate over residues 686 to 704 (SPSSRSNPSPSLSRSRSQS).

Detected in the brain (at protein level).

Its subcellular location is the cytoplasm. Essential for the homeostatic regulation of sleep and motor activity, by depressing hyperactivity and wakefulness. May function, at least in part, by ensuring dopamine biosynthesis. The chain is BTB/POZ domain-containing protein 9 from Drosophila melanogaster (Fruit fly).